The following is a 214-amino-acid chain: Pyridoxine/pyridoxamine 5'-phosphate oxidase (214 aa).

Residues 8–11 (RTNY) and Lys-66 each bind substrate. FMN-binding positions include 61-66 (RIVLIK), 76-77 (FT), Arg-82, Lys-83, and Gln-105. The substrate site is built by Tyr-123, Arg-127, and Ser-131. FMN-binding positions include 140–141 (QS) and Trp-184. A substrate-binding site is contributed by 190–192 (RLH). Position 194 (Arg-194) interacts with FMN.

This sequence belongs to the pyridoxamine 5'-phosphate oxidase family. Homodimer. It depends on FMN as a cofactor.

The enzyme catalyses pyridoxamine 5'-phosphate + O2 + H2O = pyridoxal 5'-phosphate + H2O2 + NH4(+). It catalyses the reaction pyridoxine 5'-phosphate + O2 = pyridoxal 5'-phosphate + H2O2. The protein operates within cofactor metabolism; pyridoxal 5'-phosphate salvage; pyridoxal 5'-phosphate from pyridoxamine 5'-phosphate: step 1/1. It participates in cofactor metabolism; pyridoxal 5'-phosphate salvage; pyridoxal 5'-phosphate from pyridoxine 5'-phosphate: step 1/1. Catalyzes the oxidation of either pyridoxine 5'-phosphate (PNP) or pyridoxamine 5'-phosphate (PMP) into pyridoxal 5'-phosphate (PLP). In Burkholderia mallei (strain NCTC 10247), this protein is Pyridoxine/pyridoxamine 5'-phosphate oxidase.